Reading from the N-terminus, the 587-residue chain is Complement component C8 beta chain (587 aa).

The N-terminal stretch at 1 to 31 (MNHKLKPTVGLGYCLLCAALCLLLLRDVAIA) is a signal peptide. Residues 32-44 (GSGEEPSGVREAR) constitute a propeptide that is removed on maturation. The 56-residue stretch at 56-111 (DCVQSEWSSWTRCDVCRKKRYRYAKLVQPSQFGGEPCHVQGKEVEPCSPPSRYDCT) folds into the TSP type-1 1 domain. 5 cysteine pairs are disulfide-bonded: cysteine 57–cysteine 92, cysteine 68–cysteine 102, cysteine 71–cysteine 110, cysteine 118–cysteine 129, and cysteine 123–cysteine 142. Tryptophan 62 and tryptophan 65 each carry a C-linked (Man) tryptophan glycan. Residues 117-159 (LCEGFLCTYTGRCVPIDLRCNGDDDCGDWSAEKGSPKVPKACK) enclose the LDL-receptor class A domain. Residues leucine 134, asparagine 137, aspartate 139, aspartate 141, and glutamate 148 each contribute to the Ca(2+) site. One can recognise an MACPF domain in the interval 154-500 (VPKACKQEAQ…EYLEESSSCR (347 aa)). Cysteine 158 and cysteine 196 form a disulfide bridge. Beta stranded transmembrane passes span 248–255 (TTVSIGFA), 258–265 (GVAEFGFN), 375–382 (EQIVLKVG), and 388–395 (VYVTVGLE). 5 disulfides stabilise this stretch: cysteine 374–cysteine 399, cysteine 499–cysteine 546, cysteine 501–cysteine 517, cysteine 504–cysteine 519, and cysteine 521–cysteine 530. In terms of domain architecture, EGF-like spans 501 to 531 (CAPCRNNGLAVLKGTRCECVCPSGYSGLGCE). In terms of domain architecture, TSP type-1 2 spans 541–587 (DGSWSCWGSWSPCRGRSKTRSRQCNNPAPSSGGIACRGLQMETTDCF). Tryptophan 547 and tryptophan 550 each carry a C-linked (Man) tryptophan glycan. An intrachain disulfide couples cysteine 553 to cysteine 586.

This sequence belongs to the complement C6/C7/C8/C9 family. Heterotrimer of 3 chains: alpha (C8A), beta (C8B) and gamma (C8G); the alpha and gamma chains are disulfide bonded. Component of the membrane attack complex (MAC), composed of complement C5b, C6, C7, C8A, C8B, C8G and multiple copies of the pore-forming subunit C9.

The protein resides in the secreted. The protein localises to the target cell membrane. Component of the membrane attack complex (MAC), a multiprotein complex activated by the complement cascade, which inserts into a target cell membrane and forms a pore, leading to target cell membrane rupture and cell lysis. The MAC is initiated by proteolytic cleavage of C5 into complement C5b in response to the classical, alternative, lectin and GZMK complement pathways. The complement pathways consist in a cascade of proteins that leads to phagocytosis and breakdown of pathogens and signaling that strengthens the adaptive immune system. C8B, together with C8A and C8G, inserts into the target membrane, but does not form pores by itself. During MAC assembly, associates with C5b, C6 and C7 to form the C5b8 intermediate complex that inserts into the target membrane and traverses the bilayer increasing membrane rigidity. In Oncorhynchus mykiss (Rainbow trout), this protein is Complement component C8 beta chain (c8b).